The chain runs to 192 residues: uncharacterized protein (192 aa).

The 132-residue stretch at 29–160 (HRQAAVLIPI…PLDIYRRGDS (132 aa)) folds into the Nudix hydrolase domain. The Nudix box signature appears at 67 to 89 (GAVDDTDASVIAAALREAEEEVA). Positions 83 and 87 each coordinate Mg(2+).

The protein belongs to the Nudix hydrolase family. PCD1 subfamily. Requires Mn(2+) as cofactor. Mg(2+) serves as cofactor.

Probably mediates the hydrolysis of some nucleoside diphosphate derivatives. This is an uncharacterized protein from Shigella flexneri.